Reading from the N-terminus, the 187-residue chain is Ribosome-recycling factor (187 aa).

Belongs to the RRF family.

It localises to the cytoplasm. Functionally, responsible for the release of ribosomes from messenger RNA at the termination of protein biosynthesis. May increase the efficiency of translation by recycling ribosomes from one round of translation to another. The polypeptide is Ribosome-recycling factor (Bradyrhizobium sp. (strain ORS 278)).